Here is a 105-residue protein sequence, read N- to C-terminus: UPF0166 protein aq_450 (105 aa).

This sequence belongs to the UPF0166 family.

In Aquifex aeolicus (strain VF5), this protein is UPF0166 protein aq_450.